A 325-amino-acid polypeptide reads, in one-letter code: MKNQLLDAKVASEEQETVLRPSLLNDFTGQNQMKSNLKIFITSSIERDESLDHTLLHGPPGLGKTTIAQIIAKEKNVNLKSTAGPILSKAADLAAILTNLQKNDVLFIDEIHRLNIHVEEILYSAMEDFSLDIMIGEGPSARSVKIYLPKFTLIGATTRLGLISKPLCDRFGIHLKLNFYSCEELTKIVERGAKVLNVALDTNAAIEIANRSRGTPRIALRLLKRVRDFGIYQNINPLNQQITDYALNQLGIDKLGLDSSDHKYLRFIAENYDGGPVGIDTIAAALSEQRDTIEEMIEPYLIQIGFVQRTQRGRVITANALKHLH.

A large ATPase domain (RuvB-L) region spans residues 1–180; sequence MKNQLLDAKV…FGIHLKLNFY (180 aa). ATP-binding positions include Leu-19, Arg-20, Gly-61, Lys-64, Thr-65, Thr-66, 127–129, Arg-170, Tyr-180, and Arg-217; that span reads EDF. Residue Thr-65 coordinates Mg(2+). The tract at residues 181-251 is small ATPAse domain (RuvB-S); that stretch reads SCEELTKIVE…ITDYALNQLG (71 aa). Positions 254 to 325 are head domain (RuvB-H); sequence KLGLDSSDHK…ITANALKHLH (72 aa). DNA is bound by residues Arg-290, Arg-309, and Arg-314.

This sequence belongs to the RuvB family. As to quaternary structure, homohexamer. Forms an RuvA(8)-RuvB(12)-Holliday junction (HJ) complex. HJ DNA is sandwiched between 2 RuvA tetramers; dsDNA enters through RuvA and exits via RuvB. An RuvB hexamer assembles on each DNA strand where it exits the tetramer. Each RuvB hexamer is contacted by two RuvA subunits (via domain III) on 2 adjacent RuvB subunits; this complex drives branch migration. In the full resolvosome a probable DNA-RuvA(4)-RuvB(12)-RuvC(2) complex forms which resolves the HJ.

Its subcellular location is the cytoplasm. It catalyses the reaction ATP + H2O = ADP + phosphate + H(+). In terms of biological role, the RuvA-RuvB-RuvC complex processes Holliday junction (HJ) DNA during genetic recombination and DNA repair, while the RuvA-RuvB complex plays an important role in the rescue of blocked DNA replication forks via replication fork reversal (RFR). RuvA specifically binds to HJ cruciform DNA, conferring on it an open structure. The RuvB hexamer acts as an ATP-dependent pump, pulling dsDNA into and through the RuvAB complex. RuvB forms 2 homohexamers on either side of HJ DNA bound by 1 or 2 RuvA tetramers; 4 subunits per hexamer contact DNA at a time. Coordinated motions by a converter formed by DNA-disengaged RuvB subunits stimulates ATP hydrolysis and nucleotide exchange. Immobilization of the converter enables RuvB to convert the ATP-contained energy into a lever motion, pulling 2 nucleotides of DNA out of the RuvA tetramer per ATP hydrolyzed, thus driving DNA branch migration. The RuvB motors rotate together with the DNA substrate, which together with the progressing nucleotide cycle form the mechanistic basis for DNA recombination by continuous HJ branch migration. Branch migration allows RuvC to scan DNA until it finds its consensus sequence, where it cleaves and resolves cruciform DNA. This Orientia tsutsugamushi (strain Ikeda) (Rickettsia tsutsugamushi) protein is Holliday junction branch migration complex subunit RuvB.